A 657-amino-acid chain; its full sequence is Hemocyanin B chain (657 aa).

A disulfide bridge connects residues Cys93 and Cys98. Asn167 is a glycosylation site (N-linked (GlcNAc...) asparagine). Cu cation-binding residues include His194, His198, His224, His344, His348, and His384. 2 disulfide bridges follow: Cys483-Cys502 and Cys562-Cys609.

It belongs to the tyrosinase family. Hemocyanin subfamily. Hexamer of a number of different chains, of which A, B, and C have been identified. As to expression, hemolymph.

The protein localises to the secreted. Its subcellular location is the extracellular space. Its function is as follows. Hemocyanins are copper-containing oxygen carriers occurring freely dissolved in the hemolymph of many mollusks and arthropods. This Panulirus interruptus (California spiny lobster) protein is Hemocyanin B chain.